The primary structure comprises 231 residues: Heptaprenylglyceryl phosphate synthase (231 aa).

Residue Lys-12 coordinates sn-glycerol 1-phosphate. Residues Asp-14 and Thr-40 each contribute to the Mg(2+) site. Residues 159–164 (YMEYSG), Gly-189, and 209–210 (GN) each bind sn-glycerol 1-phosphate.

Belongs to the GGGP/HepGP synthase family. Group I subfamily. Homodimer. Mg(2+) is required as a cofactor.

It carries out the reaction sn-glycerol 1-phosphate + all-trans-heptaprenyl diphosphate = 3-heptaprenyl-sn-glycero-1-phosphate + diphosphate. Its pathway is membrane lipid metabolism; glycerophospholipid metabolism. Prenyltransferase that catalyzes in vivo the transfer of the heptaprenyl moiety of heptaprenyl pyrophosphate (HepPP; 35 carbon atoms) to the C3 hydroxyl of sn-glycerol-1-phosphate (G1P), producing heptaprenylglyceryl phosphate (HepGP). This reaction is an ether-bond-formation step in the biosynthesis of archaea-type G1P-based membrane lipids found in Bacillales. In Brevibacillus brevis (strain 47 / JCM 6285 / NBRC 100599), this protein is Heptaprenylglyceryl phosphate synthase.